We begin with the raw amino-acid sequence, 312 residues long: uncharacterized protein (312 aa).

The interval 95-119 is disordered; it reads EKRRENPPKLTLPPLPPPAEERKKP.

It localises to the plastid. The protein resides in the chloroplast. This is an uncharacterized protein from Chlamydomonas moewusii (Chlamydomonas eugametos).